The following is a 144-amino-acid chain: Small ribosomal subunit protein uS9 (144 aa).

N-acetylthreonine is present on Thr2. The tract at residues 124–144 (RRESKKFGGPGARARYQKSYR) is disordered.

The protein belongs to the universal ribosomal protein uS9 family.

This Caenorhabditis elegans protein is Small ribosomal subunit protein uS9 (rps-16).